The sequence spans 593 residues: ABC transporter F family member 2 (593 aa).

Positions 1-10 (MAKKGGKNNK) are enriched in basic residues. The interval 1–25 (MAKKGGKNNKSKKEVTPPTSDVEDE) is disordered. ABC transporter domains are found at residues 53–294 (VKIE…VNQM) and 364–583 (MHFD…RDLT). ATP-binding positions include 85-92 (GQNGCGKS) and 399-406 (GPNGAGKS).

The protein belongs to the ABC transporter superfamily. ABCF family. EF3 subfamily.

The polypeptide is ABC transporter F family member 2 (abcF2) (Dictyostelium discoideum (Social amoeba)).